The chain runs to 88 residues: Small ribosomal subunit protein uS15 (88 aa).

It belongs to the universal ribosomal protein uS15 family. As to quaternary structure, part of the 30S ribosomal subunit. Forms a bridge to the 50S subunit in the 70S ribosome, contacting the 23S rRNA.

Functionally, one of the primary rRNA binding proteins, it binds directly to 16S rRNA where it helps nucleate assembly of the platform of the 30S subunit by binding and bridging several RNA helices of the 16S rRNA. In terms of biological role, forms an intersubunit bridge (bridge B4) with the 23S rRNA of the 50S subunit in the ribosome. In Verminephrobacter eiseniae (strain EF01-2), this protein is Small ribosomal subunit protein uS15.